We begin with the raw amino-acid sequence, 397 residues long: Diphosphomevalonate decarboxylase (397 aa).

Residues 19 to 22, arginine 74, 153 to 158, and threonine 209 contribute to the (R)-5-diphosphomevalonate site; these read YWGK and SGSACR. The disordered stretch occupies residues 378–397; it reads GPGPQDTKSSLIDPETGLPR.

Belongs to the diphosphomevalonate decarboxylase family. In terms of assembly, homodimer.

The enzyme catalyses (R)-5-diphosphomevalonate + ATP = isopentenyl diphosphate + ADP + phosphate + CO2. Its pathway is isoprenoid biosynthesis; isopentenyl diphosphate biosynthesis via mevalonate pathway; isopentenyl diphosphate from (R)-mevalonate: step 3/3. Diphosphomevalonate decarboxylase; part of the second module of ergosterol biosynthesis pathway that includes the middle steps of the pathway. The second module is carried out in the vacuole and involves the formation of farnesyl diphosphate, which is also an important intermediate in the biosynthesis of ubiquinone, dolichol, heme and prenylated proteins. Activity by the mevalonate kinase ERG12 first converts mevalonate into 5-phosphomevalonate. 5-phosphomevalonate is then further converted to 5-diphosphomevalonate by the phosphomevalonate kinase ERG8. The diphosphomevalonate decarboxylase MVD1/ERG19 then produces isopentenyl diphosphate. The isopentenyl-diphosphate delta-isomerase IDI1 then catalyzes the 1,3-allylic rearrangement of the homoallylic substrate isopentenyl (IPP) to its highly electrophilic allylic isomer, dimethylallyl diphosphate (DMAPP). Finally the farnesyl diphosphate synthase ERG20 catalyzes the sequential condensation of isopentenyl pyrophosphate with dimethylallyl pyrophosphate, and then with the resultant geranylpyrophosphate to the ultimate product farnesyl pyrophosphate. The chain is Diphosphomevalonate decarboxylase from Eremothecium gossypii (strain ATCC 10895 / CBS 109.51 / FGSC 9923 / NRRL Y-1056) (Yeast).